A 376-amino-acid chain; its full sequence is MRMLFRSFLATEAAGGIILIAAAAAAMLVANSPLAPTYFELLHARLGPLSLLHWINDALMALFFLLVGLEIKREFLRGHLARWSDRILPCIAAAAGMAAPALLYLAFAGGTEGLVRGWAIPTATDIAFAIGVLALLGSRAPASLKLFLTTIAIVDDMGAVAIIALAYTAAISGPALLAAIVILAAMAGLGRIGVRRLWPYLLLAAALWLAVLLSGVHATIAGVLAALAIPLGDEDDSPLERLEHGLHPWVAFAIVPLFGFANAGVSFAEIGAEQLLAPLPLGIAAGLFLGKQAGIFGSVRLAVALGLAQRPAGASWTQLYGVALLCGIGFTMSLFIGGLAFSDPLLIDEVKIGVLGGSILSAIAGYALLRWTGKVT.

The next 11 helical transmembrane spans lie at 8 to 28 (FLAT…AAML), 49 to 69 (LSLL…LVGL), 87 to 107 (ILPC…YLAF), 117 to 137 (GWAI…ALLG), 140 to 160 (APAS…MGAV), 162 to 182 (IIAL…AIVI), 209 to 229 (LAVL…ALAI), 248 to 268 (PWVA…VSFA), 270 to 290 (IGAE…LFLG), 321 to 341 (GVAL…GLAF), and 349 to 369 (EVKI…YALL).

Belongs to the NhaA Na(+)/H(+) (TC 2.A.33) antiporter family.

The protein resides in the cell inner membrane. The catalysed reaction is Na(+)(in) + 2 H(+)(out) = Na(+)(out) + 2 H(+)(in). Its function is as follows. Na(+)/H(+) antiporter that extrudes sodium in exchange for external protons. This is Na(+)/H(+) antiporter NhaA from Rhizorhabdus wittichii (strain DSM 6014 / CCUG 31198 / JCM 15750 / NBRC 105917 / EY 4224 / RW1) (Sphingomonas wittichii).